Here is a 61-residue protein sequence, read N- to C-terminus: Small ribosomal subunit protein eS30A (61 aa).

The interval methionine 1–lysine 36 is disordered.

It belongs to the eukaryotic ribosomal protein eS30 family. As to quaternary structure, component of the small ribosomal subunit (SSU). Mature yeast ribosomes consist of a small (40S) and a large (60S) subunit. The 40S small subunit contains 1 molecule of ribosomal RNA (18S rRNA) and at least 33 different proteins. The large 60S subunit contains 3 rRNA molecules (25S, 5.8S and 5S rRNA) and at least 46 different proteins.

It is found in the cytoplasm. Its subcellular location is the nucleus. Component of the ribosome, a large ribonucleoprotein complex responsible for the synthesis of proteins in the cell. The small ribosomal subunit (SSU) binds messenger RNAs (mRNAs) and translates the encoded message by selecting cognate aminoacyl-transfer RNA (tRNA) molecules. The large subunit (LSU) contains the ribosomal catalytic site termed the peptidyl transferase center (PTC), which catalyzes the formation of peptide bonds, thereby polymerizing the amino acids delivered by tRNAs into a polypeptide chain. The nascent polypeptides leave the ribosome through a tunnel in the LSU and interact with protein factors that function in enzymatic processing, targeting, and the membrane insertion of nascent chains at the exit of the ribosomal tunnel. The protein is Small ribosomal subunit protein eS30A (rps3001) of Schizosaccharomyces pombe (strain 972 / ATCC 24843) (Fission yeast).